A 169-amino-acid chain; its full sequence is uncharacterized protein (169 aa).

It is found in the mitochondrion. This is an uncharacterized protein from Paramecium tetraurelia.